The primary structure comprises 1881 residues: Nuclear pore membrane glycoprotein 210-like (1881 aa).

A signal peptide spans 1–32 (MIAFGAPRRRSFGLLFSLAPHLFFLFLIGTLA). Asn-80, Asn-344, and Asn-808 each carry an N-linked (GlcNAc...) asparagine glycan. Positions 1078-1150 (FPPFRLIPEK…TIQTVNEDTG (73 aa)) constitute a BIG2 domain. A glycan (N-linked (GlcNAc...) asparagine) is linked at Asn-1441. A helical membrane pass occupies residues 1804–1824 (YQILLFTLFAVLASTSFIFLA).

This sequence belongs to the NUP210 family. Expressed in testis.

The protein localises to the nucleus membrane. It is found in the nucleus. The protein resides in the nucleoplasm. This is Nuclear pore membrane glycoprotein 210-like (Nup210l) from Mus musculus (Mouse).